The primary structure comprises 308 residues: 4-hydroxy-tetrahydrodipicolinate synthase (308 aa).

Residue T56 coordinates pyruvate. Y144 acts as the Proton donor/acceptor in catalysis. The active-site Schiff-base intermediate with substrate is the K172. V212 is a pyruvate binding site.

Belongs to the DapA family. In terms of assembly, homotetramer; dimer of dimers.

Its subcellular location is the cytoplasm. The enzyme catalyses L-aspartate 4-semialdehyde + pyruvate = (2S,4S)-4-hydroxy-2,3,4,5-tetrahydrodipicolinate + H2O + H(+). It functions in the pathway amino-acid biosynthesis; L-lysine biosynthesis via DAP pathway; (S)-tetrahydrodipicolinate from L-aspartate: step 3/4. Functionally, catalyzes the condensation of (S)-aspartate-beta-semialdehyde [(S)-ASA] and pyruvate to 4-hydroxy-tetrahydrodipicolinate (HTPA). The protein is 4-hydroxy-tetrahydrodipicolinate synthase of Kineococcus radiotolerans (strain ATCC BAA-149 / DSM 14245 / SRS30216).